The chain runs to 485 residues: NADH-quinone oxidoreductase subunit N (485 aa).

14 helical membrane passes run 8-28, 35-55, 71-91, 105-125, 127-147, 159-179, 203-223, 235-255, 271-291, 297-317, 326-346, 373-393, 408-430, and 455-475; these read LIAL…MLSI, FLNA…LWFV, GFAM…CTFA, FYLL…ANHL, SLFL…GYAF, YTIL…LVYA, LLAG…LVPF, PAPV…GVVM, VVLA…ALSQ, LLGY…IALQ, VGVY…VVSL, AAVM…LGFI, WWLV…RVAV, and IVVL…QPLI.

It belongs to the complex I subunit 2 family. As to quaternary structure, NDH-1 is composed of 13 different subunits. Subunits NuoA, H, J, K, L, M, N constitute the membrane sector of the complex.

It localises to the cell inner membrane. The enzyme catalyses a quinone + NADH + 5 H(+)(in) = a quinol + NAD(+) + 4 H(+)(out). Its function is as follows. NDH-1 shuttles electrons from NADH, via FMN and iron-sulfur (Fe-S) centers, to quinones in the respiratory chain. The immediate electron acceptor for the enzyme in this species is believed to be ubiquinone. Couples the redox reaction to proton translocation (for every two electrons transferred, four hydrogen ions are translocated across the cytoplasmic membrane), and thus conserves the redox energy in a proton gradient. The polypeptide is NADH-quinone oxidoreductase subunit N (Shigella dysenteriae serotype 1 (strain Sd197)).